Consider the following 185-residue polypeptide: Elongation factor P (185 aa).

Belongs to the elongation factor P family.

It is found in the cytoplasm. It functions in the pathway protein biosynthesis; polypeptide chain elongation. Its function is as follows. Involved in peptide bond synthesis. Stimulates efficient translation and peptide-bond synthesis on native or reconstituted 70S ribosomes in vitro. Probably functions indirectly by altering the affinity of the ribosome for aminoacyl-tRNA, thus increasing their reactivity as acceptors for peptidyl transferase. The chain is Elongation factor P from Alkaliphilus metalliredigens (strain QYMF).